The sequence spans 141 residues: Hemoglobin subunit alpha (141 aa).

A Globin domain is found at 1 to 141 (VLSSTDKSNV…VSTVLTSKYR (141 aa)). Phosphoserine is present on S3. N6-succinyllysine occurs at positions 7 and 11. The residue at position 16 (K16) is an N6-acetyllysine; alternate. K16 is modified (N6-succinyllysine; alternate). Y24 bears the Phosphotyrosine mark. S35 is subject to Phosphoserine. N6-succinyllysine is present on K40. H58 contacts O2. H87 is a heme b binding site. S102 carries the phosphoserine modification. T108 carries the phosphothreonine modification. A phosphoserine mark is found at S124 and S131. Phosphothreonine occurs at positions 134 and 137. Phosphoserine is present on S138.

The protein belongs to the globin family. In terms of assembly, heterotetramer of two alpha chains and two beta chains. Red blood cells.

Involved in oxygen transport from the lung to the various peripheral tissues. Its function is as follows. Hemopressin acts as an antagonist peptide of the cannabinoid receptor CNR1. Hemopressin-binding efficiently blocks cannabinoid receptor CNR1 and subsequent signaling. The protein is Hemoglobin subunit alpha of Pteropus vampyrus (Large flying fox).